We begin with the raw amino-acid sequence, 189 residues long: Probable nicotinate-nucleotide adenylyltransferase (189 aa).

Belongs to the NadD family.

The catalysed reaction is nicotinate beta-D-ribonucleotide + ATP + H(+) = deamido-NAD(+) + diphosphate. It functions in the pathway cofactor biosynthesis; NAD(+) biosynthesis; deamido-NAD(+) from nicotinate D-ribonucleotide: step 1/1. In terms of biological role, catalyzes the reversible adenylation of nicotinate mononucleotide (NaMN) to nicotinic acid adenine dinucleotide (NaAD). This Bacillus cytotoxicus (strain DSM 22905 / CIP 110041 / 391-98 / NVH 391-98) protein is Probable nicotinate-nucleotide adenylyltransferase.